A 105-amino-acid chain; its full sequence is NADH-quinone oxidoreductase subunit K (105 aa).

3 helical membrane passes run 7–27 (IGVN…MFAV), 34–54 (IVIL…FLTF), and 66–86 (FSLF…AIVI).

Belongs to the complex I subunit 4L family. NDH-1 is composed of 14 different subunits. Subunits NuoA, H, J, K, L, M, N constitute the membrane sector of the complex.

Its subcellular location is the cell inner membrane. The catalysed reaction is a quinone + NADH + 5 H(+)(in) = a quinol + NAD(+) + 4 H(+)(out). Functionally, NDH-1 shuttles electrons from NADH, via FMN and iron-sulfur (Fe-S) centers, to quinones in the respiratory chain. The immediate electron acceptor for the enzyme in this species is believed to be a menaquinone. Couples the redox reaction to proton translocation (for every two electrons transferred, four hydrogen ions are translocated across the cytoplasmic membrane), and thus conserves the redox energy in a proton gradient. In Chlorobaculum parvum (strain DSM 263 / NCIMB 8327) (Chlorobium vibrioforme subsp. thiosulfatophilum), this protein is NADH-quinone oxidoreductase subunit K.